The sequence spans 395 residues: Cyclin-A2 (395 aa).

Residues 1–93 (MLAEQENQEN…EEAADAPGLR (93 aa)) form a disordered region. A compositionally biased stretch (low complexity) spans 27–60 (ALGLLRGGPARPGPAAQAARNGEGRGAAAGQQQQ).

This sequence belongs to the cyclin family. Cyclin AB subfamily. In terms of assembly, interacts with the CDK1 and CDK2 protein kinases to form serine/threonine kinase holoenzyme complexes.

The protein resides in the nucleus. Its subcellular location is the cytoplasm. Cyclin which controls both the G1/S and the G2/M transition phases of the cell cycle. Functions through the formation of specific serine/threonine kinase holoenzyme complexes with the cyclin-dependent protein kinases CDK1 and CDK2. The cyclin subunit confers the substrate specificity of these complexes and differentially interacts with and activates CDK1 and CDK2 throughout the cell cycle. The polypeptide is Cyclin-A2 (Gallus gallus (Chicken)).